The sequence spans 497 residues: Glucose-6-phosphate isomerase (497 aa).

The Proton donor role is filled by Glu-350. Active-site residues include His-381 and Lys-485.

The protein belongs to the GPI family.

The protein localises to the cytoplasm. It carries out the reaction alpha-D-glucose 6-phosphate = beta-D-fructose 6-phosphate. It functions in the pathway carbohydrate biosynthesis; gluconeogenesis. It participates in carbohydrate degradation; glycolysis; D-glyceraldehyde 3-phosphate and glycerone phosphate from D-glucose: step 2/4. In terms of biological role, catalyzes the reversible isomerization of glucose-6-phosphate to fructose-6-phosphate. In Legionella pneumophila, this protein is Glucose-6-phosphate isomerase.